The chain runs to 447 residues: MAPVVRFAPSPTGYLHIGNARPALFNALFARRAGGRFVLRLDDTDTARSTPEFAAAIVEDLAWLGIVPDETLRQSDRIALYDAAAERLRAAGRLYPAYETSDELERRRRRQLGRGLPPVYDRAALRLTAEERAAFEAEGRRPHWRFRLDPGPVTWTDLVRGPCHVEADSLSDPVLVREDGSYLYTLPSVVDDAEIGITHVIRGEDHVTNTAVQIQIFRALGAAVPVFAHHNLLTTASGEGLSKRLGHLSLRGLRDQGYEPGAVASLAVLTGSSEAVRAVPDLDGLAALLDLAHVSRAPAKFDPHDLDQLNARLLHEMPLAAAAPRLAALGIPAAAAEPFWAAVRANLATFSDAAGWWRVVAGPAAPLIADPALAARAAALLPPEPWDATTWKSWTEAVKAATGLKGKALFLPLRLALTGLDHGPDLSGLLPLIGRERAQRRLRGEAA.

Positions 9–19 (PSPTGYLHIGN) match the 'HIGH' region motif. Residues 240 to 244 (GLSKR) carry the 'KMSKS' region motif. Lys-243 contacts ATP.

This sequence belongs to the class-I aminoacyl-tRNA synthetase family. Glutamate--tRNA ligase type 1 subfamily. As to quaternary structure, monomer.

Its subcellular location is the cytoplasm. The enzyme catalyses tRNA(Glu) + L-glutamate + ATP = L-glutamyl-tRNA(Glu) + AMP + diphosphate. Its function is as follows. Catalyzes the attachment of glutamate to tRNA(Glu) in a two-step reaction: glutamate is first activated by ATP to form Glu-AMP and then transferred to the acceptor end of tRNA(Glu). The sequence is that of Glutamate--tRNA ligase 2 from Methylobacterium sp. (strain 4-46).